The chain runs to 634 residues: Probable potassium transport system protein Kup 2 (634 aa).

Transmembrane regions (helical) follow at residues 15–35 (LTLGAIGVVYGDIGTSPLYAF), 55–75 (VLSLALWALIIVVTLKYVIFL), 101–121 (WVAVTLLGATGAALFYGDAII), 142–162 (GMSQTAIIGVTVGILAALFMF), 173–193 (LFGPVCLVWFVALAGLGLWHI), 208–228 (AVTFLVSHGVTGLFVLGAVFL), 252–272 (WLSFVWPALTLNYLGQGALAL), 303–323 (LVILATLATIIASQAVITGAY), 351–371 (IYMPGVNWLLLGGVLLLVLGF), 381–401 (YGIAVTGTMVVTTCMAFLIAW), 408–428 (PVWTALLIAPFLALDLFFFGA), and 435–455 (EGGWVPLLVAGLVGLVIFTWL).

This sequence belongs to the HAK/KUP transporter (TC 2.A.72) family.

The protein localises to the cell inner membrane. It catalyses the reaction K(+)(in) + H(+)(in) = K(+)(out) + H(+)(out). Transport of potassium into the cell. Likely operates as a K(+):H(+) symporter. This is Probable potassium transport system protein Kup 2 from Novosphingobium aromaticivorans (strain ATCC 700278 / DSM 12444 / CCUG 56034 / CIP 105152 / NBRC 16084 / F199).